Consider the following 185-residue polypeptide: Urease accessory protein UreE (185 aa).

A disordered region spans residues Leu-153–His-185. The segment covering Gly-162–His-175 has biased composition (basic residues). Basic and acidic residues predominate over residues His-176–His-185.

It belongs to the UreE family.

It localises to the cytoplasm. Functionally, involved in urease metallocenter assembly. Binds nickel. Probably functions as a nickel donor during metallocenter assembly. In Haemophilus influenzae (strain PittGG), this protein is Urease accessory protein UreE.